The chain runs to 400 residues: 3-phenylpropionate/cinnamic acid dioxygenase ferredoxin--NAD(+) reductase component (400 aa).

5 to 36 lines the FAD pocket; that stretch reads TIIIVGGGQAAAMAAASLRQQGFTGELHLFSD. 146–174 is a binding site for NAD(+); sequence SVVIVGAGTIGLELAASATQRRCKVTVIE.

This sequence belongs to the bacterial ring-hydroxylating dioxygenase ferredoxin reductase family. This dioxygenase system consists of four proteins: the two subunits of the hydroxylase component (HcaE and HcaF), a ferredoxin (HcaC) and a ferredoxin reductase (HcaD). The cofactor is FAD.

The enzyme catalyses 2 reduced [2Fe-2S]-[ferredoxin] + NAD(+) + H(+) = 2 oxidized [2Fe-2S]-[ferredoxin] + NADH. It functions in the pathway aromatic compound metabolism; 3-phenylpropanoate degradation. In terms of biological role, part of the multicomponent 3-phenylpropionate dioxygenase, that converts 3-phenylpropionic acid (PP) and cinnamic acid (CI) into 3-phenylpropionate-dihydrodiol (PP-dihydrodiol) and cinnamic acid-dihydrodiol (CI-dihydrodiol), respectively. The polypeptide is 3-phenylpropionate/cinnamic acid dioxygenase ferredoxin--NAD(+) reductase component (Shigella sonnei (strain Ss046)).